We begin with the raw amino-acid sequence, 510 residues long: NAD(P)H-quinone oxidoreductase subunit 2 B, chloroplastic (510 aa).

Helical transmembrane passes span 24 to 44 (LLLF…GLIL), 57 to 77 (IPWL…ALLF), 99 to 119 (IFQF…VEYI), 124 to 144 (MAIT…MFLC), 149 to 169 (LITI…LSGY), 183 to 203 (YLLM…WLYG), 227 to 247 (PGIS…LSLA), 295 to 315 (WHLL…LIAI), 323 to 343 (MLAY…IVGD), 354 to 374 (YMLF…LFGL), 395 to 415 (ALSL…AGFF), 418 to 438 (LHLF…IGLL), and 484 to 504 (MIVC…IIAI).

The protein belongs to the complex I subunit 2 family. NDH is composed of at least 16 different subunits, 5 of which are encoded in the nucleus.

The protein resides in the plastid. It localises to the chloroplast thylakoid membrane. The enzyme catalyses a plastoquinone + NADH + (n+1) H(+)(in) = a plastoquinol + NAD(+) + n H(+)(out). The catalysed reaction is a plastoquinone + NADPH + (n+1) H(+)(in) = a plastoquinol + NADP(+) + n H(+)(out). Functionally, NDH shuttles electrons from NAD(P)H:plastoquinone, via FMN and iron-sulfur (Fe-S) centers, to quinones in the photosynthetic chain and possibly in a chloroplast respiratory chain. The immediate electron acceptor for the enzyme in this species is believed to be plastoquinone. Couples the redox reaction to proton translocation, and thus conserves the redox energy in a proton gradient. This Citrus sinensis (Sweet orange) protein is NAD(P)H-quinone oxidoreductase subunit 2 B, chloroplastic.